The sequence spans 306 residues: N-acetylmuramic acid/N-acetylglucosamine kinase (306 aa).

Ser12 provides a ligand contact to ATP. Asn35 contributes to the substrate binding site. Thr124 contacts ATP. Residues 142-144 (GWG) and Asp149 each bind substrate. Ala208 is a binding site for ATP.

It belongs to the eukaryotic-type N-acetylglucosamine kinase family. Mg(2+) serves as cofactor.

It localises to the cytoplasm. The catalysed reaction is N-acetyl-D-glucosamine + ATP = N-acetyl-D-glucosamine 6-phosphate + ADP + H(+). It carries out the reaction N-acetyl-D-muramate + ATP = N-acetyl-D-muramate 6-phosphate + ADP + H(+). Its pathway is cell wall biogenesis; peptidoglycan recycling. Its function is as follows. Catalyzes the ATP-dependent phosphorylation of both cell wall (peptidoglycan) amino sugars, N-acetylmuramic acid (MurNAc) and N-acetylglucosamine (GlcNAc), at the 6-hydroxyl group. Neither the non-N-acetylated forms of the cell wall sugars, i.e., glucosamine and/or muramic acid, nor epimeric hexoses or 1,6-anhydro-MurNAc are substrates for the enzyme. May have a role in the rescue of the murein sugars GlcNAc and MurNAc released from muropeptides during cell wall turnover in C.acetobutylicum. This chain is N-acetylmuramic acid/N-acetylglucosamine kinase, found in Clostridium acetobutylicum (strain ATCC 824 / DSM 792 / JCM 1419 / IAM 19013 / LMG 5710 / NBRC 13948 / NRRL B-527 / VKM B-1787 / 2291 / W).